The sequence spans 968 residues: RNA polymerase-associated protein RapA (968 aa).

The region spanning 164 to 334 (DVGRRHAPRV…FARLRLLDPD (171 aa)) is the Helicase ATP-binding domain. 177-184 (DEVGLGKT) is an ATP binding site. The DEAH box motif lies at 280 to 283 (DEAH). Residues 490–643 (RVEWLMGYLT…HTCPTGRAVY (154 aa)) enclose the Helicase C-terminal domain.

This sequence belongs to the SNF2/RAD54 helicase family. RapA subfamily. In terms of assembly, interacts with the RNAP. Has a higher affinity for the core RNAP than for the holoenzyme. Its ATPase activity is stimulated by binding to RNAP.

Functionally, transcription regulator that activates transcription by stimulating RNA polymerase (RNAP) recycling in case of stress conditions such as supercoiled DNA or high salt concentrations. Probably acts by releasing the RNAP, when it is trapped or immobilized on tightly supercoiled DNA. Does not activate transcription on linear DNA. Probably not involved in DNA repair. The protein is RNA polymerase-associated protein RapA of Erwinia tasmaniensis (strain DSM 17950 / CFBP 7177 / CIP 109463 / NCPPB 4357 / Et1/99).